The primary structure comprises 507 residues: Ribosomal protein uS12 methylthiotransferase RimO (507 aa).

Positions 13–124 constitute an MTTase N-terminal domain; the sequence is RRVALLTLGC…ISDRLGAVLA (112 aa). [4Fe-4S] cluster is bound by residues cysteine 22, cysteine 58, and cysteine 87. Residues 150 to 175 form a disordered region; the sequence is AAVSLPGHGTRAAAAGPGGRSAPVEV. Low complexity predominate over residues 155-172; that stretch reads PGHGTRAAAAGPGGRSAP. Residues 191 to 422 form the Radical SAM core domain; the sequence is LDTGPVASLK…ALADELCAQR (232 aa). Residues cysteine 205, cysteine 209, and cysteine 212 each contribute to the [4Fe-4S] cluster site. One can recognise a TRAM domain in the interval 424-497; it reads EQRLGSTVQV…GVDLVAVPDG (74 aa).

It belongs to the methylthiotransferase family. RimO subfamily. It depends on [4Fe-4S] cluster as a cofactor.

Its subcellular location is the cytoplasm. The enzyme catalyses L-aspartate(89)-[ribosomal protein uS12]-hydrogen + (sulfur carrier)-SH + AH2 + 2 S-adenosyl-L-methionine = 3-methylsulfanyl-L-aspartate(89)-[ribosomal protein uS12]-hydrogen + (sulfur carrier)-H + 5'-deoxyadenosine + L-methionine + A + S-adenosyl-L-homocysteine + 2 H(+). Catalyzes the methylthiolation of an aspartic acid residue of ribosomal protein uS12. The protein is Ribosomal protein uS12 methylthiotransferase RimO of Salinispora arenicola (strain CNS-205).